A 266-amino-acid polypeptide reads, in one-letter code: Nitrate import ATP-binding protein NrtD (266 aa).

Residues 3–234 form the ABC transporter domain; sequence LEITDLNRVF…DEETPKNRTY (232 aa). Residue 39-46 participates in ATP binding; that stretch reads GASGSGKS.

Belongs to the ABC transporter superfamily. Nitrate/nitrite/cyanate uptake transporter (NitT) (TC 3.A.1.16) family. In terms of assembly, the complex is composed of two ATP-binding proteins (NrtC and NrtD), two transmembrane proteins (NrtB) and a solute-binding protein (NrtA).

The protein localises to the cell inner membrane. The catalysed reaction is nitrate(out) + ATP + H2O = nitrate(in) + ADP + phosphate + H(+). Its function is as follows. Part of the ABC transporter complex NrtABCD involved in nitrate uptake. The complex is probably also involved in nitrite transport. Probably responsible for energy coupling to the transport system. This chain is Nitrate import ATP-binding protein NrtD (nrtD), found in Synechocystis sp. (strain ATCC 27184 / PCC 6803 / Kazusa).